The primary structure comprises 453 residues: Luminescence regulatory protein LuxO (453 aa).

The Response regulatory domain maps to 1–112; sequence MVEDTASVAA…RLRVTVNNAI (112 aa). The residue at position 47 (D47) is a 4-aspartylphosphate. In terms of domain architecture, Sigma-54 factor interaction spans 133–362; it reads FIGSSQTMQQ…LQNVLRNIVV (230 aa). ATP contacts are provided by residues 161 to 168 and 224 to 233; these read GESGTGKE and ADGGTLFLDE.

Acts negatively to control the expression of luminescence. At low cell density, LuxO is phosphorylated, and together with sigma-54, causes repression of the luxCDABEGH operon. This repression could be indirect, LuxO could activate a negative regulator of luminescence. At high cell density, LuxO is dephosphorylated and inactive, therefore the luxCDABEGH operon is not repressed and light is emitted. LuxO and sigma-54 have also a role in activating the production of siderophore and in regulating the rugose colony morphology phenotype. The sequence is that of Luminescence regulatory protein LuxO (luxO) from Vibrio campbellii (strain ATCC BAA-1116).